The following is a 198-amino-acid chain: Calcium channel flower (198 aa).

A run of 3 helical transmembrane segments spans residues 36–56 (LGIV…LSII), 67–89 (IIQM…VCIE), and 114–134 (AVPP…GLIF).

The protein belongs to the calcium channel flower family. In terms of assembly, homomultimer. Associates with the dally/ magu complex.

The protein localises to the cell membrane. It is found in the cytoplasmic vesicle. Its subcellular location is the secretory vesicle. The protein resides in the synaptic vesicle membrane. It localises to the presynaptic cell membrane. The protein localises to the endosome. Channel activity is inhibited by La(3+), which reduces Ca(2+) influx and thus inhibits it's function in promoting activity-dependent bulk endocytosis (ADBE) in response to high stimuli. In terms of biological role, transmembrane protein which mediates synaptic endocytosis, fitness-based cell culling, neuronal culling, morphogen gradient scaling, and calcium transport. Regulates synaptic endocytosis and hence couples exo- with endocytosis. Controls two major modes of synaptic vesicle (SV) endocytosis in the synaptic boutons of neuromuscular junctions (NMJs); Ca(2+) channel-independent Clathrin-mediated endocytosis (CME) in response to mild stimulation, and Ca(2+) channel-dependent activity-dependent bulk endocytosis (ADBE) in response to strong stimulation. Functions in ADBE and subsequent SV reformation from bulk endosomes by initiating Ca(2+) channel-dependent phosphatidylinositol 4,5-bisphosphate (PtdIns(4,5)P2) compartmentalization in synaptic boutons. There it acts at the periactive zone to provide the low Ca(2+) levels required to initiate Calcineurin activation and upregulate PtdIns(4,5)P2. Conversely PtdIns(4,5)P2 enhances fwe Ca(2+) channel-activity, establishing a positive feedback loop that induces PtdIns(4,5)P2 microdomain at the periactive zone. These microdomains trigger bulk membrane invagination (i.e. ADBE) by triggering actin polymerization while also promoting localization of fwe to bulk endosomes, thereby removing the ADBE trigger to reduce endocytosis and prevent excess membrane uptake. PtdIns(4,5)P2 then promotes SV reformation from the bulk endosomes, to coordinate ADBE and subsequent SV reformation. Different combinations of the flower isoforms at the cell membrane are also required for the identification and elimination of suboptimal or supernumerary cells during development, regeneration, and adulthood. Required for the recognition and elimination of unfit cells in the developing wing during cell competition. In the developing pupal retina, mediates the elimination of unwanted postmitotic neurons, including supernumerary photoreceptor neurons that form at the periphery of the retina and are contained within incomplete ommatidia units. Also required for efficient elimination and replacement of old neurons by newly generated neurons during regeneration in the adult brain following mechanical injury. Downstream of the flower fitness fingerprints, cells identified as unwanted or unfit are eliminated via apoptosis through the expression of ahuizotl (azot). However, the cells marked for elimination by the flower isoforms only undergo apoptosis if additional thresholds are met; (1) their neighboring fit/healthy cells express different levels of the fwe isoforms, and (2) the levels of the protective signal SPARC expressed by the loser or unwanted cells are unable to inhibit caspase activation. These additional thresholds for flower-mediated apoptosis, allows useful cells to recover from transient and limited stress before they are unnecessarily eliminated. Functions with dally and magu in a mechanism of scaling, which utilises apoptosis to ensure that the dpp morphogen gradient, which mediates organ growth, remains proportional to the size of the growing wing. In this mechanism, fwe represses dally- and Magu-dependent activity in expanding the gradient, and dally/Magu inhibits fwe-dependent apoptosis to keep cell death rate low. When the levels of these different proteins are optimally regulated the gradient correctly scales with organ growth but when this fails, fwe-mediated apoptosis is activated to trim the developing tissue to match the correct size of the gradient. This is Calcium channel flower from Drosophila persimilis (Fruit fly).